The chain runs to 448 residues: MSTSTPVTEEPRSSSQMTISASTQELAELINIHLGDLRPEEPSWRVADSPISGRGIFATREIAAGEELFREHTLLVGPTAHRSMNLRTCTLCYRLIPGSTDSAALCPAGCGLPVCSECRDSTRHDLECKLFRKWKPLESQRIEPRALRILSVVRCFFLDEASRKLLYAMQANMDRYYMQEVQRAADCFEHFPREQDMLDYFYRTICAFNTNAFESRSNVDGHEVLVRALFPLAGLLNHQCTPNAAHHFENGETIVVCATERIPAGAEITMSYAKLLWSTLARKIFLGMTKHFICKCVRCQDPTENGTYLSALFCREQGCRGLVIPVQTRTLQPDWRCITCENVFPHAKMAKYQDFALNTINNRINSCSVQDMIHFINELCPRFCPSSNYVLIEAKLNVIWRMTRFDHEEYTPEEMGHMDRYREEVLAILHKLGAGECTLKKLITGEIQ.

One can recognise an SET domain in the interval 42 to 273 (PSWRVADSPI…AGAEITMSYA (232 aa)).

The protein belongs to the class V-like SAM-binding methyltransferase superfamily.

The polypeptide is SET domain-containing protein SmydA-8, isoform B (Drosophila melanogaster (Fruit fly)).